A 664-amino-acid polypeptide reads, in one-letter code: DNA mismatch repair protein MutL (664 aa).

The segment at R382–Q447 is disordered. The segment covering R427–E436 has biased composition (polar residues).

Belongs to the DNA mismatch repair MutL/HexB family.

Functionally, this protein is involved in the repair of mismatches in DNA. It is required for dam-dependent methyl-directed DNA mismatch repair. May act as a 'molecular matchmaker', a protein that promotes the formation of a stable complex between two or more DNA-binding proteins in an ATP-dependent manner without itself being part of a final effector complex. The protein is DNA mismatch repair protein MutL of Vibrio vulnificus (strain CMCP6).